The chain runs to 221 residues: Growth hormone-releasing peptides (221 aa).

A signal peptide spans 1–25; the sequence is MHLKIGTLTIRTIMLFTLCTFLTLF. A propeptide spanning residues 26-95 is cleaved from the precursor; it reads AFSTCFDETK…QPENEFLQER (70 aa). Position 107 is a phenylalanine amide (Phe107). The propeptide occupies 110–127; sequence TSDDKIAKSIPSFDKIAK. Residues Phe136, Phe156, and Phe176 each carry the phenylalanine amide modification. The propeptide occupies 179–221; sequence TPHSDRLQYEMNSHPLELKNPEEDSDRKKRQAMTFRIRTDLQM.

The protein belongs to the FARP (FMRFamide related peptide) family. In terms of tissue distribution, observed in the suprachiasmatic nucleus and in several telencephalic and diencephalic regions.

The protein resides in the secreted. Primary role is to release GH from the pituitary. May act as an endogenous ligand in the bullfrog hypothalamo-hypophysial system. This is Growth hormone-releasing peptides from Aquarana catesbeiana (American bullfrog).